A 496-amino-acid chain; its full sequence is Putative BTB/POZ domain and WD-repeat protein R61 (496 aa).

Residues 8-78 enclose the BTB domain; that stretch reads SNINLILNDE…MFSDIDIYKN (71 aa). 6 WD repeats span residues 149-189, 208-248, 250-285, 291-330, 333-371, and 422-464; these read KFPR…FNSK, IFDN…KEFQ, DYKINDICFSPDGKSCVCANKFLSIYDLDNGRRKVL, KSIGCIKTCVCWTSDNIIACGDSDGVIEFWNAETNLIIKW, VSKSRISNISFSPDRSQIAVSNQTKIILYDSIFDKKILE, and MYFS…DIIY.

It belongs to the mimivirus BTB/WD family.

This chain is Putative BTB/POZ domain and WD-repeat protein R61, found in Acanthamoeba polyphaga (Amoeba).